Reading from the N-terminus, the 219-residue chain is 7-cyano-7-deazaguanine synthase (219 aa).

Phe10–Leu20 provides a ligand contact to ATP. Cys186, Cys195, Cys198, and Cys201 together coordinate Zn(2+).

Belongs to the QueC family. In terms of assembly, homodimer. Requires Zn(2+) as cofactor.

The enzyme catalyses 7-carboxy-7-deazaguanine + NH4(+) + ATP = 7-cyano-7-deazaguanine + ADP + phosphate + H2O + H(+). Its pathway is purine metabolism; 7-cyano-7-deazaguanine biosynthesis. Functionally, catalyzes the ATP-dependent conversion of 7-carboxy-7-deazaguanine (CDG) to 7-cyano-7-deazaguanine (preQ(0)). The polypeptide is 7-cyano-7-deazaguanine synthase (Bacillus velezensis (strain DSM 23117 / BGSC 10A6 / LMG 26770 / FZB42) (Bacillus amyloliquefaciens subsp. plantarum)).